Reading from the N-terminus, the 353-residue chain is uncharacterized protein (353 aa).

Residues 233-245 show a composition bias toward polar residues; it reads ASCSNNEPSASLE. Residues 233–265 form a disordered region; the sequence is ASCSNNEPSASLESESRHFSPVNSLSPSSLSTD. The segment covering 252 to 263 has biased composition (low complexity); that stretch reads SPVNSLSPSSLS.

This is an uncharacterized protein from Saccharomyces cerevisiae (strain ATCC 204508 / S288c) (Baker's yeast).